The following is a 512-amino-acid chain: Probable cytosol aminopeptidase (512 aa).

Residues lysine 284 and aspartate 289 each coordinate Mn(2+). Lysine 296 is an active-site residue. The Mn(2+) site is built by aspartate 307, aspartate 366, and glutamate 368. Arginine 370 is a catalytic residue.

Belongs to the peptidase M17 family. Requires Mn(2+) as cofactor.

The protein resides in the cytoplasm. The enzyme catalyses Release of an N-terminal amino acid, Xaa-|-Yaa-, in which Xaa is preferably Leu, but may be other amino acids including Pro although not Arg or Lys, and Yaa may be Pro. Amino acid amides and methyl esters are also readily hydrolyzed, but rates on arylamides are exceedingly low.. The catalysed reaction is Release of an N-terminal amino acid, preferentially leucine, but not glutamic or aspartic acids.. Functionally, presumably involved in the processing and regular turnover of intracellular proteins. Catalyzes the removal of unsubstituted N-terminal amino acids from various peptides. This is Probable cytosol aminopeptidase from Cupriavidus necator (strain ATCC 17699 / DSM 428 / KCTC 22496 / NCIMB 10442 / H16 / Stanier 337) (Ralstonia eutropha).